The primary structure comprises 557 residues: DNA ligase B (557 aa).

Residue Lys125 is the N6-AMP-lysine intermediate of the active site.

This sequence belongs to the NAD-dependent DNA ligase family. LigB subfamily.

The catalysed reaction is NAD(+) + (deoxyribonucleotide)n-3'-hydroxyl + 5'-phospho-(deoxyribonucleotide)m = (deoxyribonucleotide)n+m + AMP + beta-nicotinamide D-nucleotide.. Its function is as follows. Catalyzes the formation of phosphodiester linkages between 5'-phosphoryl and 3'-hydroxyl groups in double-stranded DNA using NAD as a coenzyme and as the energy source for the reaction. The chain is DNA ligase B from Pseudomonas entomophila (strain L48).